We begin with the raw amino-acid sequence, 448 residues long: MKKYRIIVFGCQMNEHDSEVLAGILESMGYCQAGNSEDPDIILINTCCVRKTAENKVFSLLGRLRRQKAQNPNLIIGVCGCMPQQEGMAERIKQLFPHVDLIFGTHNVHQLPELIGKVIEGQKQVLEIWPGYGGELREELPVKRKEGVRAWVTIMYGCNNFCTYCIVPYVRGREKSRSPEAVYEEVARLAGEGFKEVILLGQNVNSYGKDLGVKTDFASLLESLENIDGIDRIRYMTSHPRDFSLRLVEAIAASKKVCEHFHLPVQAGSNRILKKMNRGYTREEYVDLIRYIKSLIPHATVTTDIMVGFPGETDEDFNDTLDLVREIRFDSAYTFVYNIRPGTPAAEMPDQVAENVKKERIQALIKLQNKISLERNEEEVGQTQEVLVEGEKDRGSGFIYGRNRGNKTVIFSGDPSLVGKVVPVTVTGARLAHLTGILSYNYHQEGSR.

Residues 2–120 (KKYRIIVFGC…LPELIGKVIE (119 aa)) form the MTTase N-terminal domain. 6 residues coordinate [4Fe-4S] cluster: cysteine 11, cysteine 47, cysteine 81, cysteine 158, cysteine 162, and cysteine 165. Residues 144–374 (RKEGVRAWVT…IKLQNKISLE (231 aa)) form the Radical SAM core domain. The region spanning 377–440 (EEEVGQTQEV…LAHLTGILSY (64 aa)) is the TRAM domain.

This sequence belongs to the methylthiotransferase family. MiaB subfamily. Monomer. [4Fe-4S] cluster serves as cofactor.

It localises to the cytoplasm. The enzyme catalyses N(6)-dimethylallyladenosine(37) in tRNA + (sulfur carrier)-SH + AH2 + 2 S-adenosyl-L-methionine = 2-methylsulfanyl-N(6)-dimethylallyladenosine(37) in tRNA + (sulfur carrier)-H + 5'-deoxyadenosine + L-methionine + A + S-adenosyl-L-homocysteine + 2 H(+). Catalyzes the methylthiolation of N6-(dimethylallyl)adenosine (i(6)A), leading to the formation of 2-methylthio-N6-(dimethylallyl)adenosine (ms(2)i(6)A) at position 37 in tRNAs that read codons beginning with uridine. The polypeptide is tRNA-2-methylthio-N(6)-dimethylallyladenosine synthase (Pelotomaculum thermopropionicum (strain DSM 13744 / JCM 10971 / SI)).